A 290-amino-acid chain; its full sequence is Porphobilinogen deaminase (290 aa).

An S-(dipyrrolylmethanemethyl)cysteine modification is found at Cys237.

The protein belongs to the HMBS family. Monomer. Dipyrromethane is required as a cofactor.

The enzyme catalyses 4 porphobilinogen + H2O = hydroxymethylbilane + 4 NH4(+). The protein operates within porphyrin-containing compound metabolism; protoporphyrin-IX biosynthesis; coproporphyrinogen-III from 5-aminolevulinate: step 2/4. Functionally, tetrapolymerization of the monopyrrole PBG into the hydroxymethylbilane pre-uroporphyrinogen in several discrete steps. The chain is Porphobilinogen deaminase from Clostridium botulinum (strain ATCC 19397 / Type A).